Here is a 103-residue protein sequence, read N- to C-terminus: Cell division suppressor protein YneA (103 aa).

Positions 36 to 87 constitute a LysM domain; sequence VKIKVQDGDTLWSLADHVAEKKHINKEDFIEWVTENNHLQTADIKPGDELIL.

The protein belongs to the YneA family.

It localises to the cytoplasm. Its function is as follows. Inhibits cell division during the SOS response. Affects a later stage of the cell division protein assembly, after the assembly of the Z ring, by probably suppressing recruitment of FtsL and/or DivIC to the division machinery. The chain is Cell division suppressor protein YneA from Bacillus velezensis (strain DSM 23117 / BGSC 10A6 / LMG 26770 / FZB42) (Bacillus amyloliquefaciens subsp. plantarum).